The primary structure comprises 278 residues: UPF0276 protein Swit_4400 (278 aa).

This sequence belongs to the UPF0276 family.

In Rhizorhabdus wittichii (strain DSM 6014 / CCUG 31198 / JCM 15750 / NBRC 105917 / EY 4224 / RW1) (Sphingomonas wittichii), this protein is UPF0276 protein Swit_4400.